A 101-amino-acid chain; its full sequence is Urease subunit beta (101 aa).

Belongs to the urease beta subunit family. Heterotrimer of UreA (gamma), UreB (beta) and UreC (alpha) subunits. Three heterotrimers associate to form the active enzyme.

It localises to the cytoplasm. It carries out the reaction urea + 2 H2O + H(+) = hydrogencarbonate + 2 NH4(+). The protein operates within nitrogen metabolism; urea degradation; CO(2) and NH(3) from urea (urease route): step 1/1. The protein is Urease subunit beta of Burkholderia ambifaria (strain ATCC BAA-244 / DSM 16087 / CCUG 44356 / LMG 19182 / AMMD) (Burkholderia cepacia (strain AMMD)).